Reading from the N-terminus, the 210-residue chain is Glutathione S-transferase mdpJ (210 aa).

The 82-residue stretch at 2 to 83 (SFGTLYTHNP…YCNDERSSLR (82 aa)) folds into the GST N-terminal domain. The 124-residue stretch at 77–200 (DERSSLRILQ…VAGGVPDLGL (124 aa)) folds into the GST C-terminal domain.

The protein belongs to the GST superfamily.

It participates in secondary metabolite biosynthesis. Its function is as follows. Glutathione S-transferase; part of the gene cluster that mediates the biosynthesis of monodictyphenone, a prenyl xanthone derivative. The pathway begins with the synthesis of atrochrysone thioester by the polyketide synthase (PKS) mdpG. The atrochrysone carboxyl ACP thioesterase mdpF then breaks the thioester bond and releases the atrochrysone carboxylic acid from mdpG. The atrochrysone carboxylic acid is then converted to atrochrysone which is further transformed into emodin anthrone. The next step is performed by the anthrone oxygenase mdpH that catalyzes the oxidation of emodinanthrone to emodin. Emodin is further modified to yield monodictyphenone via several steps involving mdpB, mdpC mdpJ, mdpK and mdpL. These enzymes with xptA, xptB and xptC are also proposed to be involved in the synthesis of shamixanthone from emodin. Especially, direct reduction of emodin by the short chain dehydrogenase mdpC followed by dehydration catalyzed by the scytalone dehydratase-like protein mdpB gives loss of oxygen and formation of chrysophanol intermediate in two simple steps. The sequence is that of Glutathione S-transferase mdpJ from Emericella nidulans (strain FGSC A4 / ATCC 38163 / CBS 112.46 / NRRL 194 / M139) (Aspergillus nidulans).